The sequence spans 141 residues: MVVERTLSIIKPDAVAKNVIGQIYARFEAAGLKVVAARMAHLSRVEAENFYAIHRERPFFKDLVEFMISGPVMIQVLEGENAIAKNRELMGATDPKKAEKGTIRADFAENIDANAVHGSDAPETAAVEIACFFPSLEVYSR.

ATP is bound by residues lysine 11, phenylalanine 59, arginine 87, threonine 93, arginine 104, and asparagine 114. Histidine 117 (pros-phosphohistidine intermediate) is an active-site residue.

It belongs to the NDK family. As to quaternary structure, homotetramer. The cofactor is Mg(2+).

The protein resides in the cytoplasm. It catalyses the reaction a 2'-deoxyribonucleoside 5'-diphosphate + ATP = a 2'-deoxyribonucleoside 5'-triphosphate + ADP. The catalysed reaction is a ribonucleoside 5'-diphosphate + ATP = a ribonucleoside 5'-triphosphate + ADP. Major role in the synthesis of nucleoside triphosphates other than ATP. The ATP gamma phosphate is transferred to the NDP beta phosphate via a ping-pong mechanism, using a phosphorylated active-site intermediate. In Nitrosomonas eutropha (strain DSM 101675 / C91 / Nm57), this protein is Nucleoside diphosphate kinase.